A 68-amino-acid chain; its full sequence is Large ribosomal subunit protein uL29 (68 aa).

The protein belongs to the universal ribosomal protein uL29 family.

The protein is Large ribosomal subunit protein uL29 (rpl29) of Archaeoglobus fulgidus (strain ATCC 49558 / DSM 4304 / JCM 9628 / NBRC 100126 / VC-16).